A 549-amino-acid chain; its full sequence is Cation/acetate symporter ActP (549 aa).

Transmembrane regions (helical) follow at residues 33 to 53 (WQAI…TYWA), 77 to 97 (LAIA…ALVF), 103 to 123 (GLIY…LIAE), 148 to 168 (ILSA…QMVG), 183 to 203 (IAVV…GMLA), 206 to 226 (WVQI…AFMV), 262 to 282 (ISAL…PHIL), 303 to 323 (GFMG…IMLV), 355 to 375 (LFLG…VAGL), 404 to 424 (VSKI…VLFE), 428 to 448 (IAFM…PIIL), 464 to 484 (GGWL…TIWV), and 493 to 513 (IFPY…GIWF).

Belongs to the sodium:solute symporter (SSF) (TC 2.A.21) family.

Its subcellular location is the cell inner membrane. Its function is as follows. Transports acetate. The polypeptide is Cation/acetate symporter ActP (Escherichia coli O8 (strain IAI1)).